The sequence spans 1254 residues: MTKLMVRSECMLRMVRRRPLRVQFCARWFSTKKNTAEAPRINPVGIQYLGESLQRQVFGSCGGKDEVEQSDKLMELSKKSLKDHGLWGKKTLITDPISFPLPPLQGRSLDEHFQKIGRFNSEPYKSFCEDKFTEMVARPAEWLRKPGWVKYVPGMAPVEVAYPDEELVVFDVETLYNVSDYPTLATALSSTAWYLWCSPFICGGDDPAALIPLNTLNKEQVIIGHNVAYDRARVLEEYNFRDSKAFFLDTQSLHIASFGLCSRQRPMFMKNNKKKEAEVESEVHPEISIEDYDDPWLNVSALNSLKDVAKFHCKIDLDKTDRDFFASTDKSTIIENFQKLVNYCATDVTATSQVFDEIFPVFLKKCPHPVSFAGLKSLSKCILPTKLNDWNDYLNSSESLYQQSKVQIESKIVQIIKDIVLLKDKPDFYLKDPWLSQLDWTTKPLRLTKKGVPAKCQKLPGFPEWYRQLFPSKDTVEPKITIKSRIIPILFKLSWENSPVIWSKESGWCFNVPHEQVETYKAKNYVLADSVSQEEEEIRTHNLGLQCTGVLFKVPHPNGPTFNCTNLLTKSYNHFFEKGVLKSESELAHQALQINSSGSYWMSARERIQSQFVVPSCKFPNEFQSLSAKSSLNNEKTNDLAIIIPKIVPMGTITRRAVENAWLTASNAKANRIGSELKTQVKAPPGYCFVGADVDSEELWIASLVGDSIFNVHGGTAIGWMCLEGTKNEGTDLHTKTAQILGCSRNEAKIFNYGRIYGAGAKFASQLLKRFNPSLTDEETKKIANKLYENTKGKTKRSKLFKKFWYGGSESILFNKLESIAEQETPKTPVLGCGITYSLMKKNLRANSFLPSRINWAIQSSGVDYLHLLCCSMEYIIKKYNLEARLCISIHDEIRFLVSEKDKYRAAMALQISNIWTRAMFCQQMGINELPQNCAFFSQVDIDSVIRKEVNMDCITPSNKTAIPHGEALDINQLLDKSNSKLGKPNLDIDSKVSQYAYNYREPVFEEYNKSYTPEFLKYFLAMQVQSDKRDVNRLEDEYLRECTSKEYARDGNTAEYSLLDYIKDVEKGKRTKVRIMGSNFLDGTKNAKADQRIRLPVNMPDYPTLHKIANDSAIPEKQLLENRRKKENRIDDENKKKLTRKKNTTPMERKYKRVYGGRKAFEAFYECANKPLDYTLETEKQFFNIPIDGVIDDVLNDKSNYKKKPSQARTASSSPIRKTAKAVHSKKLPARKSSTTNRNLVELERDITISREY.

Over residues 1125 to 1137 (RKKENRIDDENKK) the composition is skewed to basic and acidic residues. Disordered stretches follow at residues 1125–1145 (RKKE…KKNT) and 1202–1240 (YKKK…TNRN). The span at 1208–1217 (QARTASSSPI) shows a compositional bias: polar residues. A compositionally biased stretch (basic residues) spans 1219 to 1231 (KTAKAVHSKKLPA).

Belongs to the DNA polymerase type-A family. Mg(2+) serves as cofactor.

It localises to the mitochondrion. The enzyme catalyses DNA(n) + a 2'-deoxyribonucleoside 5'-triphosphate = DNA(n+1) + diphosphate. Functionally, involved in the replication of mitochondrial DNA. The polypeptide is DNA polymerase gamma (MIP1) (Saccharomyces cerevisiae (strain ATCC 204508 / S288c) (Baker's yeast)).